A 362-amino-acid polypeptide reads, in one-letter code: Probable S-adenosylmethionine-dependent methyltransferase At5g37970 (362 aa).

S-adenosyl-L-homocysteine-binding residues include tyrosine 19, cysteine 66, asparagine 71, aspartate 107, serine 136, and phenylalanine 137. Asparagine 175, glutamate 261, and phenylalanine 263 together coordinate Mg(2+).

This sequence belongs to the methyltransferase superfamily. Type-7 methyltransferase family. As to quaternary structure, homodimer. Mg(2+) serves as cofactor.

The polypeptide is Probable S-adenosylmethionine-dependent methyltransferase At5g37970 (Arabidopsis thaliana (Mouse-ear cress)).